We begin with the raw amino-acid sequence, 118 residues long: Large ribosomal subunit protein uL18 (118 aa).

Belongs to the universal ribosomal protein uL18 family. In terms of assembly, part of the 50S ribosomal subunit; part of the 5S rRNA/L5/L18/L25 subcomplex. Contacts the 5S and 23S rRNAs.

In terms of biological role, this is one of the proteins that bind and probably mediate the attachment of the 5S RNA into the large ribosomal subunit, where it forms part of the central protuberance. In Limosilactobacillus reuteri (strain DSM 20016) (Lactobacillus reuteri), this protein is Large ribosomal subunit protein uL18.